A 239-amino-acid chain; its full sequence is U-scoloptoxin(11)-Sm3a (239 aa).

Residues 1-16 (MINFLLLVLILSVLES) form the signal peptide.

It belongs to the scoloptoxin-11 family. Contains 9 disulfide bonds. In terms of tissue distribution, expressed by the venom gland.

It localises to the secreted. The sequence is that of U-scoloptoxin(11)-Sm3a from Scolopendra morsitans (Tanzanian blue ringleg centipede).